The following is a 425-amino-acid chain: Orexin/Hypocretin receptor type 1 (425 aa).

The interval 1 to 25 (MEPSATPGPQMGVPTEGRERSPEPP) is disordered. Over 1-46 (MEPSATPGPQMGVPTEGRERSPEPPDYEDEFLRYLWRDYLYPKQYE) the chain is Extracellular. The segment at 26–41 (DYEDEFLRYLWRDYLY) is required for response to orexin-A. The chain crosses the membrane as a helical span at residues 47 to 67 (WVLIAAYVAVFFVALVGNTLV). Over 68-82 (CLAVWRNHHMRTVTN) the chain is Cytoplasmic. A helical transmembrane segment spans residues 83-105 (YFIVNLSLADVLVTAICLPASLL). The Extracellular portion of the chain corresponds to 106–119 (VDITESWLFGHALC). Cysteines 119 and 202 form a disulfide. The chain crosses the membrane as a helical span at residues 120–140 (KVIPYLQAVSVSVAVLTLSFI). Over 141–160 (ALDRWYAICHPLLFKSTARR) the chain is Cytoplasmic. The chain crosses the membrane as a helical span at residues 161–182 (ARGSILGIWAVSLAVMVPQAAV). At 183–213 (MECSSVLPELANRTRLFSVCDERWADDLYPK) the chain is on the extracellular side. Asparagine 194 carries an N-linked (GlcNAc...) asparagine glycan. The chain crosses the membrane as a helical span at residues 214–235 (IYHSCFFIVTYLAPLGLMAMAY). The Cytoplasmic segment spans residues 236–298 (FQIFRKLWGR…QMRARRKTAK (63 aa)). A helical membrane pass occupies residues 299-321 (MLMVVLLVFALCYLPISVLNVLK). Residues 322 to 336 (RVFGMFRQASDREAV) lie on the Extracellular side of the membrane. The chain crosses the membrane as a helical span at residues 337 to 360 (YACFTFSHWLVYANSAANPIIYNF). Over 361 to 425 (LSGKFREQFK…LLTSVTTVLP (65 aa)) the chain is Cytoplasmic.

It belongs to the G-protein coupled receptor 1 family.

It localises to the cell membrane. Functionally, moderately selective excitatory receptor for orexin-A and, with a lower affinity, for orexin-B neuropeptide. Triggers an increase in cytoplasmic Ca(2+) levels in response to orexin-A binding. This chain is Orexin/Hypocretin receptor type 1, found in Bos taurus (Bovine).